The following is a 202-amino-acid chain: Osteoclast-stimulating factor 1 (202 aa).

One can recognise an SH3 domain in the interval 12–71 (GQVKVFRALYTFEPRTPDELYFEEGDIIYISDMSDTNWWKGTCKGRTGLIPSNYVAEQAE). ANK repeat units follow at residues 72-101 (SIDN…GVNG), 105-135 (AGNT…ELNQ), and 139-168 (LGDT…RTDL).

It localises to the cytoplasm. In terms of biological role, induces bone resorption, acting probably through a signaling cascade which results in the secretion of factor(s) enhancing osteoclast formation and activity. In Gallus gallus (Chicken), this protein is Osteoclast-stimulating factor 1 (OSTF1).